The chain runs to 427 residues: Serine--tRNA ligase (427 aa).

An L-serine-binding site is contributed by 231–233 (TAE). Position 262–264 (262–264 (RSE)) interacts with ATP. Residue glutamate 285 coordinates L-serine. Position 349–352 (349–352 (EISS)) interacts with ATP. Serine 385 provides a ligand contact to L-serine.

This sequence belongs to the class-II aminoacyl-tRNA synthetase family. Type-1 seryl-tRNA synthetase subfamily. As to quaternary structure, homodimer. The tRNA molecule binds across the dimer.

Its subcellular location is the cytoplasm. The catalysed reaction is tRNA(Ser) + L-serine + ATP = L-seryl-tRNA(Ser) + AMP + diphosphate + H(+). It catalyses the reaction tRNA(Sec) + L-serine + ATP = L-seryl-tRNA(Sec) + AMP + diphosphate + H(+). The protein operates within aminoacyl-tRNA biosynthesis; selenocysteinyl-tRNA(Sec) biosynthesis; L-seryl-tRNA(Sec) from L-serine and tRNA(Sec): step 1/1. In terms of biological role, catalyzes the attachment of serine to tRNA(Ser). Is also able to aminoacylate tRNA(Sec) with serine, to form the misacylated tRNA L-seryl-tRNA(Sec), which will be further converted into selenocysteinyl-tRNA(Sec). In Rhizobium leguminosarum bv. trifolii (strain WSM2304), this protein is Serine--tRNA ligase.